The chain runs to 870 residues: Patatin-like phospholipase domain-containing protein NCU11180 (870 aa).

Disordered regions lie at residues 1-24 (MADDTDNPPNIQIPAKSYGFPPEA) and 131-158 (KVIKTDRDEKRNKRGKDRKNKKPRKGVA). Over residues 131–141 (KVIKTDRDEKR) the composition is skewed to basic and acidic residues. Over residues 142–155 (NKRGKDRKNKKPRK) the composition is skewed to basic residues. Residues 183-203 (WPFLLFVSFWIVGLGMAYLAT) form a helical membrane-spanning segment. A disordered region spans residues 281–320 (EEVERELESQSQNSDSGVASGEETSNTKAGGGNNGNDKKT). The span at 289-308 (SQSQNSDSGVASGEETSNTK) shows a compositional bias: polar residues. Residues 399–590 (LCLSGGATFA…RTDIPIKSLN (192 aa)) form the PNPLA domain. Residues 430–434 (GTSGG) carry the GXSXG motif. The active-site Nucleophile is Ser-432. Asp-577 (proton acceptor) is an active-site residue. Disordered stretches follow at residues 735–786 (RRET…DRRG) and 804–870 (GREG…HSRT). Residues 818-834 (TEDELTMTELEGEDDDG) show a composition bias toward acidic residues.

It belongs to the PLPL family.

The protein localises to the membrane. Probable lipid hydrolase. This Neurospora crassa (strain ATCC 24698 / 74-OR23-1A / CBS 708.71 / DSM 1257 / FGSC 987) protein is Patatin-like phospholipase domain-containing protein NCU11180.